A 356-amino-acid chain; its full sequence is S-adenosylmethionine:tRNA ribosyltransferase-isomerase (356 aa).

This sequence belongs to the QueA family. Monomer.

It localises to the cytoplasm. The enzyme catalyses 7-aminomethyl-7-carbaguanosine(34) in tRNA + S-adenosyl-L-methionine = epoxyqueuosine(34) in tRNA + adenine + L-methionine + 2 H(+). The protein operates within tRNA modification; tRNA-queuosine biosynthesis. Functionally, transfers and isomerizes the ribose moiety from AdoMet to the 7-aminomethyl group of 7-deazaguanine (preQ1-tRNA) to give epoxyqueuosine (oQ-tRNA). The sequence is that of S-adenosylmethionine:tRNA ribosyltransferase-isomerase from Xanthomonas campestris pv. campestris (strain B100).